Consider the following 626-residue polypeptide: Probable potassium transport system protein Kup (626 aa).

The next 12 helical transmembrane spans lie at 13–33, 53–73, 102–122, 138–158, 169–189, 207–227, 248–268, 277–297, 338–358, 367–387, 399–419, and 421–441; these read VALMMGALGVVYGDIGTSPLY, VLSILFWLLMVVVSFKYVLLI, FFVVLGIFGAALFYGDSMITP, HTLDPWIVPLALLVLLALFAI, LFGPVMVVWFATLGVLGGWQV, FVFEFPVMSFLLLGAVVLALT, WFSMVLPSLTLCYLGQGALLL, PFFLMAPEWGLAALVGLATVA, IYLPQVNALLLCAVLVLVITF, AYGFAVTGTMLMTSILAFAVL, WMLVLGVLLIIDVLLFSANIF, and IHEGGWMPLLVGVVVFTLMMT.

This sequence belongs to the HAK/KUP transporter (TC 2.A.72) family.

The protein resides in the cell inner membrane. It catalyses the reaction K(+)(in) + H(+)(in) = K(+)(out) + H(+)(out). Functionally, transport of potassium into the cell. Likely operates as a K(+):H(+) symporter. The polypeptide is Probable potassium transport system protein Kup (Bordetella avium (strain 197N)).